A 206-amino-acid chain; its full sequence is Large ribosomal subunit protein uL4 (206 aa).

A disordered region spans residues 44-77 (RQGTRAQKDRQTVKHSTKKPWRQKGTGRARAGMT). Residues 56-70 (VKHSTKKPWRQKGTG) are compositionally biased toward basic residues.

The protein belongs to the universal ribosomal protein uL4 family. Part of the 50S ribosomal subunit.

In terms of biological role, one of the primary rRNA binding proteins, this protein initially binds near the 5'-end of the 23S rRNA. It is important during the early stages of 50S assembly. It makes multiple contacts with different domains of the 23S rRNA in the assembled 50S subunit and ribosome. Forms part of the polypeptide exit tunnel. The polypeptide is Large ribosomal subunit protein uL4 (Methylibium petroleiphilum (strain ATCC BAA-1232 / LMG 22953 / PM1)).